A 399-amino-acid chain; its full sequence is 3-methyl-2-oxobutanoate hydroxymethyltransferase 2, mitochondrial (399 aa).

A mitochondrion-targeting transit peptide spans Met1–Arg90. Mg(2+) contacts are provided by Asp125 and Asp164. Residues Asp125 to Ser126, Asp164, and Lys194 contribute to the 3-methyl-2-oxobutanoate site. Glu196 lines the Mg(2+) pocket. Glu264 (proton acceptor) is an active-site residue.

Belongs to the PanB family. The cofactor is Mg(2+).

It is found in the mitochondrion. It carries out the reaction 3-methyl-2-oxobutanoate + (6R)-5,10-methylene-5,6,7,8-tetrahydrofolate + H2O = 2-dehydropantoate + (6S)-5,6,7,8-tetrahydrofolate. It participates in cofactor biosynthesis; (R)-pantothenate biosynthesis; (R)-pantoate from 3-methyl-2-oxobutanoate: step 1/2. Its function is as follows. Catalyzes the reversible reaction in which hydroxymethyl group from 5,10-methylenetetrahydrofolate is transferred onto alpha-ketoisovalerate to form ketopantoate. This Oryza sativa subsp. japonica (Rice) protein is 3-methyl-2-oxobutanoate hydroxymethyltransferase 2, mitochondrial (KPHMT2).